We begin with the raw amino-acid sequence, 279 residues long: Undecaprenyl-diphosphatase (279 aa).

The next 8 helical transmembrane spans lie at 2–22 (LIIE…TEWL), 44–64 (AFIE…VMLI), 85–105 (WQLW…AVPL), 113–133 (FYFM…FIWI), 163–183 (VLSI…AIIL), 188–208 (TVAA…YSGL), 223–243 (AQVL…LLAI), and 255–275 (FTIF…YSFF).

The protein belongs to the UppP family.

Its subcellular location is the cell membrane. It catalyses the reaction di-trans,octa-cis-undecaprenyl diphosphate + H2O = di-trans,octa-cis-undecaprenyl phosphate + phosphate + H(+). In terms of biological role, catalyzes the dephosphorylation of undecaprenyl diphosphate (UPP). Confers resistance to bacitracin. The chain is Undecaprenyl-diphosphatase from Streptococcus pyogenes serotype M5 (strain Manfredo).